The sequence spans 346 residues: NADH-ubiquinone oxidoreductase chain 2 (346 aa).

The next 11 membrane-spanning stretches (helical) occupy residues 1 to 21 (MNPH…TITI), 25 to 45 (HWVL…PLIS), 60 to 80 (FLTQ…NAWA), 95 to 115 (CLLL…HFWF), 124 to 144 (LMTA…LLLM), 149 to 169 (LNPA…GWMG), 178 to 195 (ILAF…IILV), 200 to 219 (LALL…FMAL), 242 to 262 (ATLM…GFMP), 274 to 294 (EMTP…FFYL), and 326 to 346 (AILA…HAIV).

The protein belongs to the complex I subunit 2 family.

It localises to the mitochondrion inner membrane. The enzyme catalyses a ubiquinone + NADH + 5 H(+)(in) = a ubiquinol + NAD(+) + 4 H(+)(out). Core subunit of the mitochondrial membrane respiratory chain NADH dehydrogenase (Complex I) that is believed to belong to the minimal assembly required for catalysis. Complex I functions in the transfer of electrons from NADH to the respiratory chain. The immediate electron acceptor for the enzyme is believed to be ubiquinone. In Anas acuta (Northern pintail), this protein is NADH-ubiquinone oxidoreductase chain 2 (MT-ND2).